Consider the following 344-residue polypeptide: L-rhamnose-proton symporter (344 aa).

The next 10 membrane-spanning stretches (helical) occupy residues 4–24 (AITMGIFWHLIGAASAACFYA), 38–58 (WSVGGIVSWIILPWAISALLL), 68–88 (FSLSTLLPVFLFGAMWGIGNI), 101–121 (MGIGIAIGITLIVGTLMTPII), 137–157 (TLLGVLVALIGVGIVTRAGQL), 175–195 (LVLAVMCGIFSAGMSFAMNAA), 214–234 (LPSYVVIMGGGAIINLGFCFI), 259–279 (VLLSTLGGLMWYLQFFFYAWG), 290–310 (ISWMLHMSFYVLCGGIVGLVL), and 323–343 (VLSLGCVVIIVAANIVGIGMA).

It belongs to the L-rhamnose transporter (TC 2.A.7.6) family.

It localises to the cell inner membrane. It carries out the reaction L-rhamnopyranose(in) + H(+)(in) = L-rhamnopyranose(out) + H(+)(out). Functionally, uptake of L-rhamnose across the cytoplasmic membrane with the concomitant transport of protons into the cell (symport system). This chain is L-rhamnose-proton symporter, found in Escherichia coli (strain ATCC 8739 / DSM 1576 / NBRC 3972 / NCIMB 8545 / WDCM 00012 / Crooks).